Here is a 154-residue protein sequence, read N- to C-terminus: Prefoldin subunit 2 (154 aa).

Disordered regions lie at residues 1–20 (MADS…GKGA) and 126–154 (LMGE…VLVS). Over residues 9–18 (GKSGGSGTGK) the composition is skewed to gly residues. Basic and acidic residues predominate over residues 126 to 139 (LMGEDEKPAAKENS). The span at 141–154 (GAGAKSSSAGVLVS) shows a compositional bias: low complexity.

It belongs to the prefoldin subunit beta family. Heterohexamer of two PFD-alpha type and four PFD-beta type subunits. Component of the PAQosome complex which is responsible for the biogenesis of several protein complexes and which consists of R2TP complex members RUVBL1, RUVBL2, RPAP3 and PIH1D1, URI complex members PFDN2, PFDN6, PDRG1, UXT and URI1 as well as ASDURF, POLR2E and DNAAF10/WDR92. Interacts with URI1; the interaction is phosphorylation-dependent and occurs in a growth-dependent manner.

It is found in the nucleus. The protein localises to the cytoplasm. The protein resides in the mitochondrion. Its function is as follows. Binds specifically to cytosolic chaperonin (c-CPN) and transfers target proteins to it. Binds to nascent polypeptide chain and promotes folding in an environment in which there are many competing pathways for nonnative proteins. This Rattus norvegicus (Rat) protein is Prefoldin subunit 2 (Pfdn2).